A 353-amino-acid chain; its full sequence is MPKRIVYNISSDFQLKSLLGEGAYGVVCSATHKPTGEIVAIKKIEPFDKPLFALRTLREIKILKHFKHENIITIFNIQRPDSFENFNEVYIIQELMQTDLHRVISTQMLSDDHIQYFIYQTLRAVKVLHGSNVIHRDLKPSNLLINSNCDLKVCDFGLARIIDESAADNSEPTGQQSGMTEYVATRWYRAPEVMLTSAKYSRAMDVWSCGCILAELFLRRPIFPGRDYRHQLLLIFGIIGTPHSDNDLRCIESPRAREYIKSLPMYPAAPLEKMFPRVNPKGIDLLQRMLVFDPAKRITAKEALEHPYLQTYHDPNDEPEGEPIPPSFFEFDHYKEALTTKDLKKLIWNEIFS.

Residues 13-309 (FQLKSLLGEG…AKEALEHPYL (297 aa)) enclose the Protein kinase domain. ATP contacts are provided by residues 19–27 (LGEGAYGVV) and lysine 42. Aspartate 137 (proton acceptor) is an active-site residue. Residue threonine 180 is modified to Phosphothreonine. The short motif at 180-182 (TEY) is the TXY element. Tyrosine 182 is modified (phosphotyrosine). Lysine 345 participates in a covalent cross-link: Glycyl lysine isopeptide (Lys-Gly) (interchain with G-Cter in ubiquitin).

This sequence belongs to the protein kinase superfamily. CMGC Ser/Thr protein kinase family. MAP kinase subfamily. In the nucleus, FUS3 forms a complex with DIG1, DIG2 and STE12. The interaction of FUS3 with STE12 depends on the presence of both DIG1 and DIG2. STE12 is lost from FUS3/DIG1/DIG2 complex after pheromone treatment. During its activation and phosphorylation, FUS3 forms a membrane-associated complex with the scaffold protein STE5, the MAPKK STE7, the MAPKKK STE11, and the G-protein beta subunit GBB/STE4; interacting directly with STE7 and STE5. Mg(2+) is required as a cofactor. Post-translationally, dually phosphorylated on Thr-180 and Tyr-182 by STE7 in response to pheromone induction, which activates the enzyme. Activated FUS3 initiates a feedback signal, down-regulating phosphorylation of both, FUS3 and KSS1.

It localises to the nucleus. The protein resides in the cytoplasm. The protein localises to the periplasm. The enzyme catalyses L-seryl-[protein] + ATP = O-phospho-L-seryl-[protein] + ADP + H(+). It catalyses the reaction L-threonyl-[protein] + ATP = O-phospho-L-threonyl-[protein] + ADP + H(+). Activated by tyrosine and threonine phosphorylation after pheromone treatment. Functionally, together with closely related KSS1, FUS3 is the final kinase in the signal transduction cascade regulating activation/repression of the mating and filamentation pathways, induced by pheromone and nitrogen/carbon limitation, respectively. Phosphorylated FUS3 activates the mating but suppresses the filamentation pathway, whereas activated KSS1 activates both pathways. Pheromone-activated FUS3 functions by inhibiting the binding of the transcriptional activator STE12 to filamentation specific genes while inducing its binding to and activity at mating specific genes. Non-activated FUS3 has a repressive effect on STE12 transcriptional activity. KSS1 can partially compensate for the lack of FUS3 but mating efficiency is reduced and the filamentation program is partially activated upon pheromone signaling. FUS3 phosphorylates STE7, STE5, FAR1, DIG1, DIG2 and STE12. The chain is Mitogen-activated protein kinase FUS3 (FUS3) from Saccharomyces cerevisiae (strain ATCC 204508 / S288c) (Baker's yeast).